The primary structure comprises 434 residues: Probable carboxypeptidase BDCG_03757 (434 aa).

An N-terminal signal peptide occupies residues 1-20; it reads MKLSHLAAALSAQLVAPVAA. 2 N-linked (GlcNAc...) asparagine glycosylation sites follow: N136 and N150. A Zn(2+)-binding site is contributed by D160. E192 (proton acceptor) is an active-site residue. E193 is a Zn(2+) binding site. The N-linked (GlcNAc...) asparagine glycan is linked to N343.

The protein belongs to the peptidase M20A family. Requires Zn(2+) as cofactor.

It is found in the secreted. This chain is Probable carboxypeptidase BDCG_03757, found in Ajellomyces dermatitidis (strain ER-3 / ATCC MYA-2586) (Blastomyces dermatitidis).